Here is a 355-residue protein sequence, read N- to C-terminus: Ribosomal RNA small subunit methyltransferase H (355 aa).

S-adenosyl-L-methionine-binding positions include 47–49, Asp-65, Phe-92, Asp-113, and Gln-120; that span reads GGY. The tract at residues 332–355 is disordered; it reads LLPLATLPETSHPKSASHSKSRRR. A compositionally biased stretch (basic residues) spans 346–355; that stretch reads SASHSKSRRR.

This sequence belongs to the methyltransferase superfamily. RsmH family.

Its subcellular location is the cytoplasm. It carries out the reaction cytidine(1402) in 16S rRNA + S-adenosyl-L-methionine = N(4)-methylcytidine(1402) in 16S rRNA + S-adenosyl-L-homocysteine + H(+). Its function is as follows. Specifically methylates the N4 position of cytidine in position 1402 (C1402) of 16S rRNA. The chain is Ribosomal RNA small subunit methyltransferase H from Beijerinckia indica subsp. indica (strain ATCC 9039 / DSM 1715 / NCIMB 8712).